The sequence spans 154 residues: Urease subunit alpha (154 aa).

Residues 38–154 enclose the Urease domain; it reads GGIDTHIHFI…ADEMDIQVAI (117 aa). Residues histidine 43, histidine 45, and lysine 126 each contribute to the Ni(2+) site. Lysine 126 is subject to N6-carboxylysine. Residue histidine 128 coordinates substrate.

This sequence belongs to the metallo-dependent hydrolases superfamily. Urease alpha subunit family. As to quaternary structure, heterotrimer of UreA (gamma), UreB (beta) and UreC (alpha) subunits. Three heterotrimers associate to form the active enzyme. It depends on Ni cation as a cofactor. In terms of processing, carboxylation allows a single lysine to coordinate two nickel ions.

It is found in the cytoplasm. It carries out the reaction urea + 2 H2O + H(+) = hydrogencarbonate + 2 NH4(+). The protein operates within nitrogen metabolism; urea degradation; CO(2) and NH(3) from urea (urease route): step 1/1. The chain is Urease subunit alpha (ureC) from Photobacterium damselae subsp. damselae (Listonella damsela).